A 325-amino-acid polypeptide reads, in one-letter code: tRNA pseudouridine synthase B (325 aa).

D49 acts as the Nucleophile in catalysis.

Belongs to the pseudouridine synthase TruB family. Type 1 subfamily.

The enzyme catalyses uridine(55) in tRNA = pseudouridine(55) in tRNA. In terms of biological role, responsible for synthesis of pseudouridine from uracil-55 in the psi GC loop of transfer RNAs. This Mesorhizobium japonicum (strain LMG 29417 / CECT 9101 / MAFF 303099) (Mesorhizobium loti (strain MAFF 303099)) protein is tRNA pseudouridine synthase B.